Reading from the N-terminus, the 263-residue chain is Versicolorin reductase 1 (263 aa).

NADP(+) contacts are provided by Ile-22, Asp-68, Asn-95, and Arg-128. Residues Ser-144 and Ser-145 each act as proton donor in the active site. Tyr-159, Lys-163, Ile-192, and Thr-194 together coordinate NADP(+). The active-site Proton acceptor is Tyr-159. Lys-163 acts as the Lowers pKa of active site Tyr in catalysis.

Belongs to the short-chain dehydrogenases/reductases (SDR) family.

It is found in the cytoplasm. It localises to the cytosol. Its pathway is mycotoxin biosynthesis. Versicolorin reductase; part of the fragmented gene cluster that mediates the biosynthesis of dothistromin (DOTH), a polyketide toxin very similar in structure to the aflatoxin precursor, versicolorin B. The first step of the pathway is the conversion of acetate to norsolorinic acid (NOR) and requires the fatty acid synthase subunits hexA and hexB, as well as the polyketide synthase pksA. PksA combines a hexanoyl starter unit and 7 malonyl-CoA extender units to synthesize the precursor NOR. The hexanoyl starter unit is provided to the acyl-carrier protein (ACP) domain by the fungal fatty acid synthase hexA/hexB. The second step is the conversion of NOR to averantin (AVN) and requires the norsolorinic acid ketoreductase nor1, which catalyzes the dehydration of norsolorinic acid to form (1'S)-averantin. The cytochrome P450 monooxygenase avnA then catalyzes the hydroxylation of AVN to 5'hydroxyaverantin (HAVN). The next step is performed by adhA that transforms HAVN to averufin (AVF). Averufin might then be converted to hydroxyversicolorone by cypX and avfA. Hydroxyversicolorone is further converted versiconal hemiacetal acetate (VHA) by moxY. VHA is then the substrate for the versiconal hemiacetal acetate esterase est1 to yield versiconal (VAL). Versicolorin B synthase vbsA then converts VAL to versicolorin B (VERB) by closing the bisfuran ring. Then, the activity of the versicolorin B desaturase verB leads to versicolorin A (VERA). DotB, a predicted chloroperoxidase, may perform epoxidation of the A-ring of VERA. Alternatively, a cytochrome P450, such as cypX or avnA could catalyze this step. It is also possible that another, uncharacterized, cytochrome P450 enzyme is responsible for this step. Opening of the epoxide could potentially be achieved by the epoxide hydrolase epoA. However, epoA seems not to be required for DOTH biosynthesis, but other epoxide hydrolases may have the ability to complement this hydrolysis. Alternatively, opening of the epoxide ring could be achieved non-enzymatically. The next step is the deoxygenation of ring A to yield the 5,8-dihydroxyanthraquinone which is most likely catalyzed by the NADPH dehydrogenase encoded by ver1. The last stages of DOTH biosynthesis are proposed to involve hydroxylation of the bisfuran. OrdB and norB might have oxidative roles here. An alternative possibility is that cytochrome P450 monoogenases such as avnA and cypX might perform these steps in addition to previously proposed steps. The polypeptide is Versicolorin reductase 1 (Dothistroma septosporum (Red band needle blight fungus)).